The following is a 555-amino-acid chain: MNIQTIMSSFTAQDKDQEVRPSSSGSWACKEVDEFDALSIEYKPKPTEKYPAKLHARNVRKYLDVGEGLIYLPGLPSFNYEDSDMPPAFRQRRYFYYITGVNLSDCIVTYNIHRDQLWLWIPPPNSGRSVIYNGARPTIKEIMSKYDFDHVETLTHLDSYLTWYAHTEPGKIHVLHDYQAPKNIELQITRKNGCHSIISESPFDSSKLEEAMNTARAIKSPYELRMIRKASAITAQGHLNVLRGLRHLSNEAEIEAIFTATCIAKQAKTQAYGVIAGSGENASTLHYMANNEPLKGRQLLCLDAGCEWDCYASDVTRTVPISGEYTEEAEAIYDIVAKMQDECIELLKPGANYRDIHIHAHKVALKGLMDLGLVEGGTFDELFMAGVSVAFFPHGLGHYVGLEVHDVGPGGSRITNRLYGFDKKPADWTDAYFQILSNTGVTSDGGSILEKDMVVTVEPGIYFSRYALEEVYLKSPNYAKYINKDLLQKYYPVGGVRIEDDLLITEDGYENLTTVLKGKEALKIINEGKEQEEEEEREANRKATESRKQKKTWFW.

4 residues coordinate Mn(2+): Asp303, Asp314, Glu458, and Glu499. The interval 527–555 (EGKEQEEEEEREANRKATESRKQKKTWFW) is disordered. The segment covering 538–547 (EANRKATESR) has biased composition (basic and acidic residues).

This sequence belongs to the peptidase M24B family. The cofactor is Mn(2+).

The enzyme catalyses Release of any N-terminal amino acid, including proline, that is linked to proline, even from a dipeptide or tripeptide.. Catalyzes the removal of a penultimate prolyl residue from the N-termini of peptides. In Botryotinia fuckeliana (strain B05.10) (Noble rot fungus), this protein is Probable Xaa-Pro aminopeptidase BC1G_13431.